Consider the following 461-residue polypeptide: Ribonuclease inhibitor (461 aa).

Serine 2 carries the N-acetylserine modification. The interval 2–11 (SLDIQSLDIQ) is 2 X 5 AA tandem repeats of S-L-D-I-Q. LRR repeat units follow at residues 20–48 (WAEL…CKDI), 49–76 (SSAL…VHCV), 77–105 (LQGL…CGVL), 106–133 (SSTL…LQLL), 134–162 (CEGL…CKPL), 163–190 (ASVL…VRVL), 191–219 (CQGL…CRDL), 220–247 (CGIV…MAEL), 248–276 (CPGL…CGDL), 277–304 (CRVL…ARLL), 305–333 (CETL…CSHF), 334–361 (SSVL…VQEL), 362–390 (CQGL…CSSL), 391–418 (AATL…ILQL), and 419–447 (VESV…EDRL). Residue serine 91 is modified to Phosphoserine.

In terms of assembly, forms high-affinity heterodimers with RNASE1, ANG and RNASE2.

It localises to the cytoplasm. The protein localises to the nucleus. Functionally, ribonuclease inhibitor which inhibits RNASE1, RNASE2 and angiogenin (ANG). May play a role in redox homeostasis. Required to inhibit the cytotoxic tRNA ribonuclease activity of ANG in the cytoplasm in absence of stress. Relocates to the nucleus in response to stress, relieving inhibition of ANG in the cytoplasm, and inhibiting the angiogenic activity of ANG in the nucleus. This is Ribonuclease inhibitor (RNH1) from Pan troglodytes (Chimpanzee).